Here is a 221-residue protein sequence, read N- to C-terminus: Phosphoribosylformylglycinamidine synthase subunit PurQ (221 aa).

Residues lysine 2–lysine 221 form the Glutamine amidotransferase type-1 domain. The active-site Nucleophile is cysteine 87. Active-site residues include histidine 195 and glutamate 197.

In terms of assembly, part of the FGAM synthase complex composed of 1 PurL, 1 PurQ and 2 PurS subunits.

It localises to the cytoplasm. The enzyme catalyses N(2)-formyl-N(1)-(5-phospho-beta-D-ribosyl)glycinamide + L-glutamine + ATP + H2O = 2-formamido-N(1)-(5-O-phospho-beta-D-ribosyl)acetamidine + L-glutamate + ADP + phosphate + H(+). It catalyses the reaction L-glutamine + H2O = L-glutamate + NH4(+). The protein operates within purine metabolism; IMP biosynthesis via de novo pathway; 5-amino-1-(5-phospho-D-ribosyl)imidazole from N(2)-formyl-N(1)-(5-phospho-D-ribosyl)glycinamide: step 1/2. Its function is as follows. Part of the phosphoribosylformylglycinamidine synthase complex involved in the purines biosynthetic pathway. Catalyzes the ATP-dependent conversion of formylglycinamide ribonucleotide (FGAR) and glutamine to yield formylglycinamidine ribonucleotide (FGAM) and glutamate. The FGAM synthase complex is composed of three subunits. PurQ produces an ammonia molecule by converting glutamine to glutamate. PurL transfers the ammonia molecule to FGAR to form FGAM in an ATP-dependent manner. PurS interacts with PurQ and PurL and is thought to assist in the transfer of the ammonia molecule from PurQ to PurL. The protein is Phosphoribosylformylglycinamidine synthase subunit PurQ of Deinococcus radiodurans (strain ATCC 13939 / DSM 20539 / JCM 16871 / CCUG 27074 / LMG 4051 / NBRC 15346 / NCIMB 9279 / VKM B-1422 / R1).